Here is a 284-residue protein sequence, read N- to C-terminus: uncharacterized protein (284 aa).

Residues 1-8 (MLWKVSKM) lie on the Cytoplasmic side of the membrane. The helical transmembrane segment at 9–25 (FLGGLVALTTISVATLY) threads the bilayer. Residues 26–80 (HYQNRLVYPSWAQGARNHVDTPDSRGIPYEKLTLITQDHIKLEAWDIKNENSTST) lie on the Extracellular side of the membrane. The chain crosses the membrane as a helical span at residues 81-101 (VLILCPNAGNIGYFILIIDIF). Residues 102–284 (YRQFGMSVFI…RDFLIEKGFI (183 aa)) are Cytoplasmic-facing.

The protein to S.pombe bem46 and M.tuberculosis Rv2307c.

Its subcellular location is the mitochondrion membrane. This is an uncharacterized protein from Saccharomyces cerevisiae (strain ATCC 204508 / S288c) (Baker's yeast).